The following is a 167-amino-acid chain: S-ribosylhomocysteine lyase (167 aa).

H54, H58, and C128 together coordinate Fe cation.

Belongs to the LuxS family. Homodimer. Requires Fe cation as cofactor.

The catalysed reaction is S-(5-deoxy-D-ribos-5-yl)-L-homocysteine = (S)-4,5-dihydroxypentane-2,3-dione + L-homocysteine. Functionally, involved in the synthesis of autoinducer 2 (AI-2) which is secreted by bacteria and is used to communicate both the cell density and the metabolic potential of the environment. The regulation of gene expression in response to changes in cell density is called quorum sensing. Catalyzes the transformation of S-ribosylhomocysteine (RHC) to homocysteine (HC) and 4,5-dihydroxy-2,3-pentadione (DPD). The chain is S-ribosylhomocysteine lyase from Haemophilus influenzae (strain PittEE).